A 564-amino-acid polypeptide reads, in one-letter code: MTETAKRPLYVPHAGPSLLEMPLLNKGSAFSTQERIDFNLQGLLPHNIETIEEQTERAYSQYNLCNTDLDRHIFLRSIQDNNETLFFRLLEEHLEEMMPIIYTPTVGQACQEFSKIYRTHRGLFISYPDRERIDDILRSATKNNVKIVVVTDSERILGLGDQGIGGMGIPIGKLSLYTACGGISPAYTLPVVLDVGTNNPDLLNDPMYMGWRHERVSGAQYEEFVDLFIQAIKRRWPNVLLQFEDFAQTNAMPLLERYKDELCCFNDDIQGTAAVAVGTLLAACKAKGEKLSEQTVTFVGAGSAGCGIAEQIIAAMQLEGLDEAQARRRIFMVDRWGLLTDDMSNLLDFQHRLAQKRADLGAWGGQQGDDLALLEVIRNARPTVLIGVSGQRGLFSEEVIRELHSHCKQPLVMPLSNPTSRVEATPQEILNWTDGQALVATGSPFQPVQVGDKRIPIAQCNNAYIFPGIGLGVIAARANRVTEGMLMAAANALANCSPIVTRGEGAVLPALGDIREVSKRIAVAVAKQAQAEGKALHTSDEVLNDAIEANFWFPRYRAYRRTSF.

Y102 (proton donor) is an active-site residue. R155 contacts NAD(+). Catalysis depends on K173, which acts as the Proton acceptor. Residues E244, D245, and D268 each contribute to the a divalent metal cation site. D268 and N417 together coordinate NAD(+).

Belongs to the malic enzymes family. Homotetramer. Mg(2+) serves as cofactor. It depends on Mn(2+) as a cofactor.

It carries out the reaction (S)-malate + NAD(+) = pyruvate + CO2 + NADH. It catalyses the reaction oxaloacetate + H(+) = pyruvate + CO2. The protein is NAD-dependent malic enzyme of Pseudomonas aeruginosa (strain UCBPP-PA14).